A 195-amino-acid polypeptide reads, in one-letter code: MAFVLSLLMALVLVSYGPGGSLGCYLSQRLMLDARENLKLLEPMNRLSPHSCLQDRKDFGLPQEMVEGDQLQKDQAFPVLYEMLQQTFNLFHTEHSSAAWDTTLLEQLCTGLQQQLEDLDTCRGQVMGEEDSELGNMDPIVTVKKYFQGIYDYLQEKGYSDCAWEIVRVEMMRALTVSTTLQKRLTKMGGDLNSP.

Residues 1–23 form the signal peptide; that stretch reads MAFVLSLLMALVLVSYGPGGSLG. 2 disulfide bridges follow: cysteine 24/cysteine 122 and cysteine 52/cysteine 162.

This sequence belongs to the alpha/beta interferon family. IFN-alphaII subfamily. As to expression, constitutively and exclusively expressed in the mononuclear cells of the extraembryonic trophectoderm.

It localises to the secreted. Paracrine hormone primarily responsible for maternal recognition of pregnancy. Interacts with endometrial receptors, probably type I interferon receptors, and blocks estrogen receptor expression, preventing the estrogen-induced increase in oxytocin receptor expression in the endometrium. This results in the suppression of the pulsatile endometrial release of the luteolytic hormone prostaglandin F2-alpha, hindering the regression of the corpus luteum (luteolysis) and therefore a return to ovarian cyclicity. This, and a possible direct effect of IFN-tau on prostaglandin synthesis, leads in turn to continued ovarian progesterone secretion, which stimulates the secretion by the endometrium of the nutrients required for the growth of the conceptus. In summary, displays particularly high antiviral and antiproliferative potency concurrently with particular weak cytotoxicity, high antiluteolytic activity and immunomodulatory properties. In contrast with other IFNs, IFN-tau is not virally inducible. The polypeptide is Interferon tau-9 (IFNT9) (Ovis aries (Sheep)).